A 152-amino-acid chain; its full sequence is MSPHSDTQETSHEATVTGQPDTLVCLTITAYKKPSLSEKEYRHHMTKVHAKLVSPLMEEYGIVRYTMTHNTKETRPMLYQLYDPQFSNQSDYDCIVQFIFKDIKDFLRMKADPRFLEKVAPDHVNFADTKRSTMTVGYYEEFVNDGKVVPKD.

An EthD domain is found at 34 to 129 (PSLSEKEYRH…APDHVNFADT (96 aa)).

Belongs to the tpcK family.

The catalysed reaction is naphtopyrone YWA1 = norrubrofusarin + H2O + H(+). Its pathway is pigment biosynthesis. Its function is as follows. Dehydratase; part of the gene cluster that mediates the biosynthesis of aurofusarin, a red mycelium pigment which is acting as a mycotoxin. The first step is performed by the polyketide synthase which condenses one acetyl-CoA and 6 malonyl-CoA units to form the first intermediate, the cyclic heptaketide and yellow pigment YWA1. The C2 hydroxyl group in the pyrone ring of YWA1 is probably formed during ring closure by an aldol-type cyclization reaction. The dehydratase aurZ then acts as the first tailoring enzyme in the aurofusarin biosynthetic pathway by converting YWA1 to nor-rubrofusarin. Nor-rubrofusarin is then methylated to rubrofusarin by the O-methyltransferase aurJ. Rubrofusarin is then transported across the plasma membrane by the rubrofusarin-specific pump aurT for further enzymatic processing by the extracellular complex composed of GIP1, aurF, aurO and aurS to yield aurofusarin. This Gibberella zeae (strain ATCC MYA-4620 / CBS 123657 / FGSC 9075 / NRRL 31084 / PH-1) (Wheat head blight fungus) protein is Dehydratase aurZ.